Consider the following 632-residue polypeptide: Nucleoside triphosphatase I (632 aa).

Residues 42–204 enclose the Helicase ATP-binding domain; that stretch reads FLGLDKMHSL…VMLVNLLRPK (163 aa). Position 55–62 (55–62) interacts with ATP; sequence HETGVGKT. The short motif at 141-144 is the DEXH box element; that stretch reads DECH. The 166-residue stretch at 367–532 folds into the Helicase C-terminal domain; the sequence is KFTDVCLRIL…EFTQLFKVFK (166 aa). The segment at 457–524 is binding to the cap-specific mRNA (nucleoside-2'-O-)-methyltransferase; that stretch reads DIFILDMTWN…DIIRTKSKEF (68 aa).

It belongs to the helicase family. NPH I subfamily. As to quaternary structure, monomer. Interacts (via C-terminus) with RAP94 (via N-terminus). Interacts with the cap-specific mRNA (nucleoside-2'-O-)-methyltransferase.

It localises to the virion. The enzyme catalyses a ribonucleoside 5'-triphosphate + H2O = a ribonucleoside 5'-diphosphate + phosphate + H(+). In terms of biological role, DNA-dependent ATPase required for providing the needed energy to achieve the termination of early transcripts. Acts in concert with the RAP94 subunit of the virion RNA polymerase and the capping enzyme/VTF to catalyze release of UUUUUNU-containing nascent RNA from the elongation complex. NPH-I must bind ssDNA in order to exhibit ATPase activity. This Myxoma virus (strain Lausanne) (MYXV) protein is Nucleoside triphosphatase I (NPH1).